We begin with the raw amino-acid sequence, 225 residues long: Ribosome maturation factor RimM (225 aa).

Residues 144–225 (ADEFYWVDLI…RIVVDWEADY (82 aa)) form the PRC barrel domain.

This sequence belongs to the RimM family. As to quaternary structure, binds ribosomal protein uS19.

The protein localises to the cytoplasm. An accessory protein needed during the final step in the assembly of 30S ribosomal subunit, possibly for assembly of the head region. Essential for efficient processing of 16S rRNA. May be needed both before and after RbfA during the maturation of 16S rRNA. It has affinity for free ribosomal 30S subunits but not for 70S ribosomes. This chain is Ribosome maturation factor RimM, found in Burkholderia lata (strain ATCC 17760 / DSM 23089 / LMG 22485 / NCIMB 9086 / R18194 / 383).